A 240-amino-acid chain; its full sequence is Eukaryotic translation initiation factor 4E-3 (240 aa).

Positions 1–51 (MVVTDSPVSGIMADQNIDPNTTTSPSPKEKHVSAIKAISGDEKAPSKEKKN) are disordered. Polar residues predominate over residues 17-26 (IDPNTTTSPS). Residues 39–51 (SGDEKAPSKEKKN) show a composition bias toward basic and acidic residues. 2 EIF4G-binding regions span residues 65 to 68 (HCFQ) and 75 to 111 (FDNP…NNIH). MRNA contacts are provided by residues 83–88 (NQVIWG), Lys-115, and 133–134 (WE). Cys-138 and Cys-176 are disulfide-bonded. The EIF4G-binding stretch occupies residues 159 to 168 (NTLLALVGEQ). MRNA-binding positions include 183-188 (RARGDR) and 228-232 (KTLDR).

It belongs to the eukaryotic initiation factor 4E family. In terms of assembly, EIF4F is a multi-subunit complex, the composition of which varies with external and internal environmental conditions. It is composed of at least EIF4A, EIF4E and EIF4G. EIF4E is also known to interact with other partners. In higher plants two isoforms of EIF4F have been identified, named isoform EIF4F and isoform EIF(iso)4F. Isoform EIF4F has subunits p220 and p26, whereas isoform EIF(iso)4F has subunits p82 and p28. In terms of processing, according to the redox status, the Cys-138-Cys-176 disulfide bridge may have a role in regulating protein function by affecting its ability to bind capped mRNA.

It localises to the nucleus. The protein localises to the cytoplasm. In terms of biological role, component of the protein complex eIF4F, which is involved in the recognition of the mRNA cap, ATP-dependent unwinding of 5'-terminal secondary structure and recruitment of mRNA to the ribosome. Recognizes and binds the 7-methylguanosine-containing mRNA cap during an early step in the initiation of protein synthesis and facilitates ribosome binding by inducing the unwinding of the mRNAs secondary structures. This chain is Eukaryotic translation initiation factor 4E-3, found in Arabidopsis thaliana (Mouse-ear cress).